The primary structure comprises 309 residues: Tumor necrosis factor ligand superfamily member 13B (309 aa).

At 1-47 the chain is on the cytoplasmic side; sequence MDESAKTLPPPCLCFCSEKGEDMKVGYDPITPQKEEGAWFGICRDGR. The chain crosses the membrane as a helical; Signal-anchor for type II membrane protein span at residues 48–68; sequence LLAATLLLALLSSSFTAMSLY. At 69–309 the chain is on the extracellular side; that stretch reads QLAALQADLM…DTFFGALKLL (241 aa). Residues 110–140 are disordered; the sequence is PAAPRPHNSSRGHRNRRAFQGPEETEQDVDL. 2 N-linked (GlcNAc...) asparagine glycosylation sites follow: Asn-117 and Asn-266. Over residues 117–126 the composition is skewed to basic residues; that stretch reads NSSRGHRNRR. Positions 169–308 constitute a THD domain; the sequence is DCLQLIADSD…DDTFFGALKL (140 aa). Cys-256 and Cys-269 are disulfide-bonded.

Belongs to the tumor necrosis factor family. In terms of assembly, homotrimer. Isoform 2 heteromultimerizes with isoform 1, probably limiting the amount of functional isoform 1 on the cell surface. In terms of processing, the soluble form derives from the membrane form by proteolytic processing. Post-translationally, isoform 2 is not efficiently shed from the membrane unlike isoform 1. Isoform 2 is expressed in many myeloid cell lines.

It localises to the cell membrane. It is found in the secreted. Functionally, cytokine that binds to TNFRSF13B/TACI and TNFRSF17/BCMA. TNFSF13/APRIL binds to the same 2 receptors. Together, they form a 2 ligands -2 receptors pathway involved in the stimulation of B- and T-cell function and the regulation of humoral immunity. A third B-cell specific BAFF-receptor (BAFFR/BR3) promotes the survival of mature B-cells and the B-cell response. In terms of biological role, isoform 2 seems to inhibit isoform 1 secretion and bioactivity. The polypeptide is Tumor necrosis factor ligand superfamily member 13B (Tnfsf13b) (Mus musculus (Mouse)).